The sequence spans 182 residues: Probable nicotinate-nucleotide adenylyltransferase (182 aa).

It belongs to the NadD family.

The enzyme catalyses nicotinate beta-D-ribonucleotide + ATP + H(+) = deamido-NAD(+) + diphosphate. Its pathway is cofactor biosynthesis; NAD(+) biosynthesis; deamido-NAD(+) from nicotinate D-ribonucleotide: step 1/1. In terms of biological role, catalyzes the reversible adenylation of nicotinate mononucleotide (NaMN) to nicotinic acid adenine dinucleotide (NaAD). This chain is Probable nicotinate-nucleotide adenylyltransferase, found in Sulfurimonas denitrificans (strain ATCC 33889 / DSM 1251) (Thiomicrospira denitrificans (strain ATCC 33889 / DSM 1251)).